We begin with the raw amino-acid sequence, 1392 residues long: DNA-directed RNA polymerase subunit beta (1392 aa).

The segment at 1372-1392 (LSSYAEEDPDEGPEALPEAAE) is disordered.

Belongs to the RNA polymerase beta chain family. In terms of assembly, the RNAP catalytic core consists of 2 alpha, 1 beta, 1 beta' and 1 omega subunit. When a sigma factor is associated with the core the holoenzyme is formed, which can initiate transcription.

The catalysed reaction is RNA(n) + a ribonucleoside 5'-triphosphate = RNA(n+1) + diphosphate. DNA-dependent RNA polymerase catalyzes the transcription of DNA into RNA using the four ribonucleoside triphosphates as substrates. The polypeptide is DNA-directed RNA polymerase subunit beta (Sphingopyxis alaskensis (strain DSM 13593 / LMG 18877 / RB2256) (Sphingomonas alaskensis)).